Reading from the N-terminus, the 172-residue chain is Ribosome maturation factor RimP (172 aa).

Belongs to the RimP family.

It is found in the cytoplasm. Required for maturation of 30S ribosomal subunits. The sequence is that of Ribosome maturation factor RimP from Nitratidesulfovibrio vulgaris (strain ATCC 29579 / DSM 644 / CCUG 34227 / NCIMB 8303 / VKM B-1760 / Hildenborough) (Desulfovibrio vulgaris).